The chain runs to 190 residues: Female-specific histamine-binding protein 1 (190 aa).

The N-terminal stretch at 1-18 (MKLLLSLAFVLALSQVKA) is a signal peptide. Histamine is bound by residues Tyr-54, Asp-57, Trp-60, Glu-100, Tyr-118, Glu-153, and Trp-155. Intrachain disulfides connect Cys-66/Cys-187 and Cys-137/Cys-166.

The protein belongs to the calycin superfamily. Histamine-binding salivary protein family. Monomer. As to expression, expressed in salivary glands.

The protein localises to the secreted. Its function is as follows. Salivary tick protein that acts by scavenging histamine at the wound site, outcompeting histamine receptors for histamine, thereby overcoming host inflammatory responses. Binds histamine with a high-affinity (Kd=18 nM). Contains two binding histamine sites (H and L), that appear to bind histamine with differing affinities (high and low). In vivo, when tested on a mouse asthma model, shows a profound inhibitory effect on allergic asthma. Aerosol administration of this protein prevents airway hyperreactivity and abrogates peribronchial inflammation, eosinophil recruitment, mucus hypersecretion, and interleukins (IL-4 and IL-5) secretion. In addition, when tested on a mouse model of acute respiratory distress syndrome (ARDS), it attenuates endotoxin-induced acute lung injury. The sequence is that of Female-specific histamine-binding protein 1 from Rhipicephalus appendiculatus (Brown ear tick).